We begin with the raw amino-acid sequence, 426 residues long: UDP-N-acetylglucosamine 1-carboxyvinyltransferase (426 aa).

K22–N23 serves as a coordination point for phosphoenolpyruvate. UDP-N-acetyl-alpha-D-glucosamine is bound at residue R99. The active-site Proton donor is the C123. 2-(S-cysteinyl)pyruvic acid O-phosphothioketal is present on C123. Residues R128–L132, D313, and I335 each bind UDP-N-acetyl-alpha-D-glucosamine.

The protein belongs to the EPSP synthase family. MurA subfamily.

Its subcellular location is the cytoplasm. It carries out the reaction phosphoenolpyruvate + UDP-N-acetyl-alpha-D-glucosamine = UDP-N-acetyl-3-O-(1-carboxyvinyl)-alpha-D-glucosamine + phosphate. It participates in cell wall biogenesis; peptidoglycan biosynthesis. Its function is as follows. Cell wall formation. Adds enolpyruvyl to UDP-N-acetylglucosamine. The polypeptide is UDP-N-acetylglucosamine 1-carboxyvinyltransferase (Zymomonas mobilis subsp. mobilis (strain ATCC 31821 / ZM4 / CP4)).